A 418-amino-acid chain; its full sequence is Dwarfin sma-2 (418 aa).

The MH1 domain maps to 8–134; sequence KKITERLKWK…YKRVHATGVL (127 aa). 4 residues coordinate Zn(2+): C62, C107, C119, and H124. An MH2 domain is found at 222–418; sequence WATVSYYELN…PTPRPISSIS (197 aa).

It belongs to the dwarfin/SMAD family.

It localises to the cytoplasm. The protein resides in the nucleus. Functionally, involved in TGF-beta pathway. Plays a role in male tail tip morphogenesis. The polypeptide is Dwarfin sma-2 (Caenorhabditis elegans).